Here is a 920-residue protein sequence, read N- to C-terminus: Vacuolar membrane protease (920 aa).

Over 1–20 (MASSRAQRFNPIAFTPWPVT) the chain is Cytoplasmic. Residues 21-41 (CITTIVYLALLIPILVINLVV) traverse the membrane as a helical segment. Over 42–378 (PSAPETNPKG…AFAVFRLHTL (337 aa)) the chain is Vacuolar. Residues Asn-53, Asn-116, and Asn-119 are each glycosylated (N-linked (GlcNAc...) asparagine). 2 residues coordinate Zn(2+): His-175 and Asp-187. The active-site Proton acceptor is the Glu-221. Glu-222 serves as a coordination point for Zn(2+). The N-linked (GlcNAc...) asparagine glycan is linked to Asn-238. Zn(2+) is bound by residues Glu-247 and His-306. Residues 379-399 (FAISVALLVIAPLVIFITSVI) form a helical membrane-spanning segment. The Cytoplasmic portion of the chain corresponds to 400-433 (LSKTDRMYLFSMSKSLEGTGDQVSLRGLRGFSRT). Residues 434–454 (PIILVIATTIPICLAYLLEKV) form a helical membrane-spanning segment. Over 455–463 (NPYIVHSSQ) the chain is Vacuolar. The chain crosses the membrane as a helical span at residues 464-484 (FSVWSMMFSAWIFLAWFLACA). At 485-495 (ADFFRPSALHR) the chain is on the cytoplasmic side. Residues 496 to 516 (AYSYTWIFVATWIMLVINTVY) form a helical membrane-spanning segment. Over 517 to 520 (ANQK) the chain is Vacuolar. A helical membrane pass occupies residues 521 to 541 (GIAAGYFLLFYFAGAFLATWI). The Cytoplasmic portion of the chain corresponds to 542–659 (SYLELFALPR…TLPRWTWVLQ (118 aa)). The interval 556 to 605 (ARQTTGRRPSSLSSRLLTSSADELRSNASPSTAEFPGAAGEDTDPTESTS) is disordered. Low complexity predominate over residues 559–575 (TTGRRPSSLSSRLLTSS). Residues 660–680 (LLLLAPIVLILVGQLALFLTA) form a helical membrane-spanning segment. The Vacuolar segment spans residues 681–693 (SMCQVGSDGVSTF). Residues 694–714 (VVYLACAVFTTLLCIPLFPLI) traverse the membrane as a helical segment. Residues 715–720 (HRFTYH) lie on the Cytoplasmic side of the membrane. Residues 721 to 741 (IPTFLFLVFIGTLIYNLVAFP) form a helical membrane-spanning segment. Residues 742 to 920 (FSPANRLKTF…VEASHSFTIQ (179 aa)) lie on the Vacuolar side of the membrane. N-linked (GlcNAc...) asparagine glycans are attached at residues Asn-760, Asn-788, and Asn-832.

The protein belongs to the peptidase M28 family. The cofactor is Zn(2+).

The protein localises to the vacuole membrane. Its function is as follows. May be involved in vacuolar sorting and osmoregulation. The protein is Vacuolar membrane protease of Ajellomyces capsulatus (strain H143) (Darling's disease fungus).